The sequence spans 95 residues: Beta-defensin 132 (95 aa).

The signal sequence occupies residues 1 to 22; that stretch reads MKFLLLVLAALRFLTQVIPASA. 3 disulfide bridges follow: Cys-27-Cys-55, Cys-35-Cys-49, and Cys-39-Cys-56. The disordered stretch occupies residues 72–95; sequence GNHWQSRRRNTQRKDKKQQTTVTS. Residues 76-87 are compositionally biased toward basic residues; it reads QSRRRNTQRKDK.

Belongs to the beta-defensin family.

Its subcellular location is the secreted. Its function is as follows. Has antibacterial activity. This chain is Beta-defensin 132 (DEFB132), found in Pongo pygmaeus (Bornean orangutan).